The sequence spans 266 residues: Undecaprenyl-diphosphatase (266 aa).

8 helical membrane-spanning segments follow: residues 1-21 (MTWLEIVVLALIQGLTEFLPI), 39-59 (QGLAFDVAVHVGTLLAVMVYF), 87-107 (WAVILGTIPACVAGLLLDSWI), 111-131 (LRSALVIALTTIGFGVLLGMA), 143-163 (FTLKDALIIGVSQALALIPGT), 186-206 (FSFLLSIPLIAAAGLFKGLEL), 217-237 (EIAGATLISAVSAYACIHLFL), and 243-263 (IGFMPFVIYRMLLGAGLLVWL).

It belongs to the UppP family.

It is found in the cell inner membrane. The enzyme catalyses di-trans,octa-cis-undecaprenyl diphosphate + H2O = di-trans,octa-cis-undecaprenyl phosphate + phosphate + H(+). In terms of biological role, catalyzes the dephosphorylation of undecaprenyl diphosphate (UPP). Confers resistance to bacitracin. The sequence is that of Undecaprenyl-diphosphatase from Hahella chejuensis (strain KCTC 2396).